Consider the following 486-residue polypeptide: N-succinylglutamate 5-semialdehyde dehydrogenase (486 aa).

NAD(+) is bound at residue 220-225 (GSSRTG). Catalysis depends on residues Glu-243 and Cys-277.

It belongs to the aldehyde dehydrogenase family. AstD subfamily.

It catalyses the reaction N-succinyl-L-glutamate 5-semialdehyde + NAD(+) + H2O = N-succinyl-L-glutamate + NADH + 2 H(+). It participates in amino-acid degradation; L-arginine degradation via AST pathway; L-glutamate and succinate from L-arginine: step 4/5. Catalyzes the NAD-dependent reduction of succinylglutamate semialdehyde into succinylglutamate. The chain is N-succinylglutamate 5-semialdehyde dehydrogenase from Shewanella baltica (strain OS185).